The primary structure comprises 236 residues: Rab-like protein 3 (236 aa).

Positions M1–D236 are small GTPase-like. GTP-binding positions include G16–S21, K148–D150, and D179–C180.

Belongs to the small GTPase superfamily. Rab family. In terms of assembly, homodimer. Interacts with GPR89; the interaction stabilizes GPR89. Interacts with RAP1GDS1.

Functionally, required for KRAS signaling regulation and modulation of cell proliferation. Regulator of KRAS prenylation, and probably prenylation of other small GTPases. Required for lymphocyte development and function. Not required for myeloid cell development. This chain is Rab-like protein 3 (RABL3), found in Homo sapiens (Human).